The following is a 201-amino-acid chain: Large ribosomal subunit protein uL4 (201 aa).

Residues alanine 45–serine 72 form a disordered region.

It belongs to the universal ribosomal protein uL4 family. As to quaternary structure, part of the 50S ribosomal subunit.

In terms of biological role, one of the primary rRNA binding proteins, this protein initially binds near the 5'-end of the 23S rRNA. It is important during the early stages of 50S assembly. It makes multiple contacts with different domains of the 23S rRNA in the assembled 50S subunit and ribosome. Its function is as follows. Forms part of the polypeptide exit tunnel. The polypeptide is Large ribosomal subunit protein uL4 (Shewanella baltica (strain OS223)).